The sequence spans 581 residues: Serine/threonine protein phosphatase 2A 55 kDa regulatory subunit B alpha isoform (581 aa).

A disordered region spans residues 1 to 27; the sequence is MMNPDGGDGDRLEAAGAGSSSAQQGHP. The segment covering 14-25 has biased composition (low complexity); sequence AAGAGSSSAQQG. 2 WD repeats span residues 47–86 and 123–164; these read QEVD…DNAS and EIEE…VKQV. Residues 172–189 are compositionally biased toward low complexity; sequence RSVGTGTSSSASTSSSRG. Positions 172–192 are disordered; sequence RSVGTGTSSSASTSSSRGLLP. 4 WD repeats span residues 241–279, 290–330, 349–387, and 492–530; these read AHDY…QSFN, DLTE…LCDN, EIIA…GPVS, and DFST…RKFI.

The protein belongs to the phosphatase 2A regulatory subunit B family. PP2A consists of a common heteromeric enzyme, composed of a catalytic subunit (subunits C), a constant regulatory subunit (subunit A), and a variety of regulatory subunits such as subunits B (the R2/B/PR55/B55, R3/B''/PR72/PR130/PR59 and R5/B'/B56 families).

The B regulatory subunit may modulate substrate selectivity and catalytic activity, and may also direct the localization of the catalytic enzyme to a particular subcellular compartment. This chain is Serine/threonine protein phosphatase 2A 55 kDa regulatory subunit B alpha isoform, found in Oryza sativa subsp. japonica (Rice).